The following is a 366-amino-acid chain: Putative [LysW]-aminoadipate semialdehyde/glutamate semialdehyde transaminase (366 aa).

Residues 90–91 (GT) and F117 each bind pyridoxal 5'-phosphate. R120 lines the substrate pocket. 202 to 205 (DEVQ) is a pyridoxal 5'-phosphate binding site. K230 carries the N6-(pyridoxal phosphate)lysine modification. S254 is a binding site for substrate. Position 255 (T255) interacts with pyridoxal 5'-phosphate.

Belongs to the class-III pyridoxal-phosphate-dependent aminotransferase family. LysJ subfamily. Homodimer. The cofactor is pyridoxal 5'-phosphate.

It localises to the cytoplasm. The enzyme catalyses [amino-group carrier protein]-C-terminal-gamma-(L-lysyl)-L-glutamate + 2-oxoglutarate = [amino-group carrier protein]-C-terminal-N-(1-carboxy-5-oxopentan-1-yl)-L-glutamine + L-glutamate. The catalysed reaction is [amino-group carrier protein]-C-terminal-gamma-(L-ornithyl)-L-glutamate + 2-oxoglutarate = [amino-group carrier protein]-C-terminal-gamma-(L-glutamyl-5-semialdehyde)-L-glutamate + L-glutamate. Its pathway is amino-acid biosynthesis; L-lysine biosynthesis via AAA pathway; L-lysine from L-alpha-aminoadipate (Thermus route): step 4/5. It functions in the pathway amino-acid biosynthesis; L-arginine biosynthesis. Functionally, involved in both the arginine and lysine biosynthetic pathways. This chain is Putative [LysW]-aminoadipate semialdehyde/glutamate semialdehyde transaminase, found in Pyrococcus horikoshii (strain ATCC 700860 / DSM 12428 / JCM 9974 / NBRC 100139 / OT-3).